Here is a 336-residue protein sequence, read N- to C-terminus: 4-hydroxy-2-oxovalerate aldolase (336 aa).

Residues 5-255 form the Pyruvate carboxyltransferase domain; that stretch reads IRIIDSTLRD…ETGVDLYKIM (251 aa). A substrate-binding site is contributed by 13–14; the sequence is RD. D14 contacts Mn(2+). The active-site Proton acceptor is H17. Substrate is bound by residues S167 and H194. Residues H194 and H196 each contribute to the Mn(2+) site. Y285 contributes to the substrate binding site.

This sequence belongs to the 4-hydroxy-2-oxovalerate aldolase family.

It carries out the reaction (S)-4-hydroxy-2-oxopentanoate = acetaldehyde + pyruvate. This Carboxydothermus hydrogenoformans (strain ATCC BAA-161 / DSM 6008 / Z-2901) protein is 4-hydroxy-2-oxovalerate aldolase (mhpE).